The following is a 305-amino-acid chain: MPLTVLFWLISKARRWAFLTGLKSSVKVSAPVIIVGNISVGGNGKTPLVVHLAQFLQANGYRPGVLSRGYGGNSRDYPCAVTRNSQPSEVGDEPVLMRQRIHCPMVVDPHRGRGAQCLVEEHDCDVIICDDGLQHYALQRDIEIVVMDAKRRTGNHFLLPSGPLRESTARLGQVDFVVVNGQNTQSGEWLMSLAPSELVNLNNPTLHLALSELDAPVIAAAGIGHPERFYKLLERHKVKLKSCLSFVDHHAFQASDLPKERVLMTEKDAVKCRAFAHDDWWYLPVDANLDSEFEQQLLMKLRNVK.

Residue 39 to 46 (SVGGNGKT) coordinates ATP.

Belongs to the LpxK family.

It carries out the reaction a lipid A disaccharide + ATP = a lipid IVA + ADP + H(+). It participates in glycolipid biosynthesis; lipid IV(A) biosynthesis; lipid IV(A) from (3R)-3-hydroxytetradecanoyl-[acyl-carrier-protein] and UDP-N-acetyl-alpha-D-glucosamine: step 6/6. In terms of biological role, transfers the gamma-phosphate of ATP to the 4'-position of a tetraacyldisaccharide 1-phosphate intermediate (termed DS-1-P) to form tetraacyldisaccharide 1,4'-bis-phosphate (lipid IVA). The protein is Tetraacyldisaccharide 4'-kinase of Pseudoalteromonas atlantica (strain T6c / ATCC BAA-1087).